The primary structure comprises 219 residues: Small ribosomal subunit protein uS19 (219 aa).

The segment at 1–128 (MGFKGAWNKR…YEEIYAQYKQ (128 aa)) is unknown. The tract at residues 129 to 219 (MTEKKAYVDP…DKTAKVVKKK (91 aa)) is small ribosomal subunit protein uS19.

The protein belongs to the universal ribosomal protein uS19 family.

Its function is as follows. Protein S19 forms a complex with S13 that binds strongly to the 16S ribosomal RNA. This is Small ribosomal subunit protein uS19 from Aquifex pyrophilus.